Reading from the N-terminus, the 508-residue chain is Monocarboxylate transporter 9 (508 aa).

At 1-12 (MEFQKSPDGGWG) the chain is on the cytoplasmic side. 12 consecutive transmembrane segments (helical) span residues 13 to 33 (WVIV…PLAV), 53 to 73 (WVGS…SLFV), 80 to 100 (PVTI…SLAP), 102 to 122 (IYFL…LLYT), 137 to 157 (GLAL…YAAL), 164 to 184 (FYGL…ILAC), 303 to 323 (VFSA…PPSL), 341 to 361 (MPLI…LGIL), 370 to 390 (LYLY…IPFA), 396 to 416 (LAIL…FPYV), 431 to 451 (GILM…VGWF), and 460 to 480 (IAFY…LLAI). Topologically, residues 481 to 508 (LPCWDMCNKKLPKPAVPTTFFYKVASNV) are cytoplasmic.

The protein belongs to the major facilitator superfamily. Monocarboxylate porter (TC 2.A.1.13) family.

The protein resides in the cell membrane. It carries out the reaction creatine(in) = creatine(out). The catalysed reaction is (R)-carnitine(in) = (R)-carnitine(out). Its function is as follows. Extracellular pH-and Na(+)-sensitive low-affinity creatine transporter. Also functions as a pH-independent carnitine efflux transporter. This Mus musculus (Mouse) protein is Monocarboxylate transporter 9 (Slc16a9).